A 280-amino-acid chain; its full sequence is uncharacterized protein (280 aa).

A run of 3 helical transmembrane segments spans residues 15–35 (IVDI…INRL), 68–88 (IGFI…ILAG), and 94–114 (IVIG…VFLI).

This sequence belongs to the MscS (TC 1.A.23) family.

Its subcellular location is the cell membrane. May play a role in resistance to osmotic downshock. This is an uncharacterized protein from Bacillus subtilis (strain 168).